Reading from the N-terminus, the 187-residue chain is Threonylcarbamoyl-AMP synthase (187 aa).

One can recognise a YrdC-like domain in the interval 4 to 187 (NHTDDPFLLD…GHSGQTIRDN (184 aa)). The segment at 168-187 (GSRSPSKIRHGHSGQTIRDN) is disordered.

This sequence belongs to the SUA5 family. TsaC subfamily.

It localises to the cytoplasm. The enzyme catalyses L-threonine + hydrogencarbonate + ATP = L-threonylcarbamoyladenylate + diphosphate + H2O. Functionally, required for the formation of a threonylcarbamoyl group on adenosine at position 37 (t(6)A37) in tRNAs that read codons beginning with adenine. Catalyzes the conversion of L-threonine, HCO(3)(-)/CO(2) and ATP to give threonylcarbamoyl-AMP (TC-AMP) as the acyladenylate intermediate, with the release of diphosphate. The chain is Threonylcarbamoyl-AMP synthase from Pseudoalteromonas atlantica (strain T6c / ATCC BAA-1087).